The primary structure comprises 203 residues: Probable nicotinate-nucleotide adenylyltransferase (203 aa).

The protein belongs to the NadD family.

The enzyme catalyses nicotinate beta-D-ribonucleotide + ATP + H(+) = deamido-NAD(+) + diphosphate. Its pathway is cofactor biosynthesis; NAD(+) biosynthesis; deamido-NAD(+) from nicotinate D-ribonucleotide: step 1/1. Its function is as follows. Catalyzes the reversible adenylation of nicotinate mononucleotide (NaMN) to nicotinic acid adenine dinucleotide (NaAD). The polypeptide is Probable nicotinate-nucleotide adenylyltransferase (Clostridium kluyveri (strain ATCC 8527 / DSM 555 / NBRC 12016 / NCIMB 10680 / K1)).